Here is a 227-residue protein sequence, read N- to C-terminus: Orotidine 5'-phosphate decarboxylase (227 aa).

Residues Asp8, Lys30, 57–66 (DLKFHDIPNT), Thr116, Arg177, Gln186, Gly206, and Arg207 contribute to the substrate site. Lys59 (proton donor) is an active-site residue.

The protein belongs to the OMP decarboxylase family. Type 1 subfamily. Homodimer.

It catalyses the reaction orotidine 5'-phosphate + H(+) = UMP + CO2. It participates in pyrimidine metabolism; UMP biosynthesis via de novo pathway; UMP from orotate: step 2/2. Functionally, catalyzes the decarboxylation of orotidine 5'-monophosphate (OMP) to uridine 5'-monophosphate (UMP). The polypeptide is Orotidine 5'-phosphate decarboxylase (Acinetobacter baumannii (strain AB307-0294)).